The primary structure comprises 444 residues: Methylenetetrahydrofolate--tRNA-(uracil-5-)-methyltransferase TrmFO (444 aa).

An FAD-binding site is contributed by 10 to 15; that stretch reads GAGLAG.

This sequence belongs to the MnmG family. TrmFO subfamily. FAD is required as a cofactor.

It is found in the cytoplasm. The catalysed reaction is uridine(54) in tRNA + (6R)-5,10-methylene-5,6,7,8-tetrahydrofolate + NADH + H(+) = 5-methyluridine(54) in tRNA + (6S)-5,6,7,8-tetrahydrofolate + NAD(+). It catalyses the reaction uridine(54) in tRNA + (6R)-5,10-methylene-5,6,7,8-tetrahydrofolate + NADPH + H(+) = 5-methyluridine(54) in tRNA + (6S)-5,6,7,8-tetrahydrofolate + NADP(+). Its function is as follows. Catalyzes the folate-dependent formation of 5-methyl-uridine at position 54 (M-5-U54) in all tRNAs. This Streptococcus equi subsp. equi (strain 4047) protein is Methylenetetrahydrofolate--tRNA-(uracil-5-)-methyltransferase TrmFO.